A 518-amino-acid polypeptide reads, in one-letter code: Membrane-bound lytic murein transglycosylase F (518 aa).

The signal sequence occupies residues 1–21 (MKKLKINYLFIGILALLLAVA). The segment at 22–269 (LWPSIPWFGK…RIEEKYLGHG (248 aa)) is non-LT domain. Residues 270–518 (DDFDYVDTRT…SRKGSEEKQN (249 aa)) are LT domain. Glutamate 314 is an active-site residue.

In the N-terminal section; belongs to the bacterial solute-binding protein 3 family. This sequence in the C-terminal section; belongs to the transglycosylase Slt family.

The protein localises to the cell outer membrane. It catalyses the reaction Exolytic cleavage of the (1-&gt;4)-beta-glycosidic linkage between N-acetylmuramic acid (MurNAc) and N-acetylglucosamine (GlcNAc) residues in peptidoglycan, from either the reducing or the non-reducing ends of the peptidoglycan chains, with concomitant formation of a 1,6-anhydrobond in the MurNAc residue.. In terms of biological role, murein-degrading enzyme that degrades murein glycan strands and insoluble, high-molecular weight murein sacculi, with the concomitant formation of a 1,6-anhydromuramoyl product. Lytic transglycosylases (LTs) play an integral role in the metabolism of the peptidoglycan (PG) sacculus. Their lytic action creates space within the PG sacculus to allow for its expansion as well as for the insertion of various structures such as secretion systems and flagella. This is Membrane-bound lytic murein transglycosylase F from Escherichia coli (strain ATCC 8739 / DSM 1576 / NBRC 3972 / NCIMB 8545 / WDCM 00012 / Crooks).